We begin with the raw amino-acid sequence, 357 residues long: MKASIYDFTLDELSQLLKPSFRAKQLYLWLYAKYKTSFKDMQNNFSKDFIAYLEQEFTLRTIEIAHVRESVDGSKKYLFKSLRDNHTFEAVLLKMKDKKIDEETNAVLEGEKYTVCVSCQIGCQVGCSFCFTQKGGFVRDLKASEIIQQALLIKEANNLPIEKALNIVFMGMGEPLNNLDEVCKAVEIFNTGMQISPKRITISTSGVADKIPILAGKNLGVQLAISLHAVDDKTRSSLMPLNKKYNIECVLNEVRKWPLEQRKRVMFEYLLIKDLNDSLDCAKKLLKLLNGIKSKVNLILFNPHEGSKFERPSLESARMFADFLNAKGLLCTIRESKALDIEAACGQLREKKLQQKI.

Glutamate 89 functions as the Proton acceptor in the catalytic mechanism. Residues 109–340 enclose the Radical SAM core domain; it reads EGEKYTVCVS…CTIRESKALD (232 aa). Cysteine 116 and cysteine 345 are joined by a disulfide. Residues cysteine 123, cysteine 127, and cysteine 130 each coordinate [4Fe-4S] cluster. S-adenosyl-L-methionine contacts are provided by residues 173-174, serine 203, 226-228, and asparagine 302; these read GE and SLH. The S-methylcysteine intermediate role is filled by cysteine 345.

Belongs to the radical SAM superfamily. RlmN family. [4Fe-4S] cluster serves as cofactor.

Its subcellular location is the cytoplasm. The enzyme catalyses adenosine(2503) in 23S rRNA + 2 reduced [2Fe-2S]-[ferredoxin] + 2 S-adenosyl-L-methionine = 2-methyladenosine(2503) in 23S rRNA + 5'-deoxyadenosine + L-methionine + 2 oxidized [2Fe-2S]-[ferredoxin] + S-adenosyl-L-homocysteine. It catalyses the reaction adenosine(37) in tRNA + 2 reduced [2Fe-2S]-[ferredoxin] + 2 S-adenosyl-L-methionine = 2-methyladenosine(37) in tRNA + 5'-deoxyadenosine + L-methionine + 2 oxidized [2Fe-2S]-[ferredoxin] + S-adenosyl-L-homocysteine. Functionally, specifically methylates position 2 of adenine 2503 in 23S rRNA and position 2 of adenine 37 in tRNAs. m2A2503 modification seems to play a crucial role in the proofreading step occurring at the peptidyl transferase center and thus would serve to optimize ribosomal fidelity. The polypeptide is Dual-specificity RNA methyltransferase RlmN (Helicobacter pylori (strain J99 / ATCC 700824) (Campylobacter pylori J99)).